Here is a 174-residue protein sequence, read N- to C-terminus: Crossover junction endodeoxyribonuclease RuvC (174 aa).

Residues D8, E67, and D139 contribute to the active site. 3 residues coordinate Mg(2+): D8, E67, and D139.

The protein belongs to the RuvC family. Homodimer which binds Holliday junction (HJ) DNA. The HJ becomes 2-fold symmetrical on binding to RuvC with unstacked arms; it has a different conformation from HJ DNA in complex with RuvA. In the full resolvosome a probable DNA-RuvA(4)-RuvB(12)-RuvC(2) complex forms which resolves the HJ. The cofactor is Mg(2+).

The protein resides in the cytoplasm. The enzyme catalyses Endonucleolytic cleavage at a junction such as a reciprocal single-stranded crossover between two homologous DNA duplexes (Holliday junction).. The RuvA-RuvB-RuvC complex processes Holliday junction (HJ) DNA during genetic recombination and DNA repair. Endonuclease that resolves HJ intermediates. Cleaves cruciform DNA by making single-stranded nicks across the HJ at symmetrical positions within the homologous arms, yielding a 5'-phosphate and a 3'-hydroxyl group; requires a central core of homology in the junction. The consensus cleavage sequence is 5'-(A/T)TT(C/G)-3'. Cleavage occurs on the 3'-side of the TT dinucleotide at the point of strand exchange. HJ branch migration catalyzed by RuvA-RuvB allows RuvC to scan DNA until it finds its consensus sequence, where it cleaves and resolves the cruciform DNA. In Pseudomonas aeruginosa (strain LESB58), this protein is Crossover junction endodeoxyribonuclease RuvC.